The sequence spans 512 residues: Endo-1,4-beta-xylanase A (512 aa).

Positions 1–30 (MKRKVKKMAAMATSIIMAIMIILHSIPVLA) are cleaved as a signal peptide. The GH11 domain occupies 33–228 (IIYDNETGTH…SSGYANVYKN (196 aa)). Glu-124 functions as the Nucleophile in the catalytic mechanism. Catalysis depends on Glu-215, which acts as the Proton donor. 2 CBM6 domains span residues 251–371 (SIIE…FIFS) and 388–508 (SIIQ…FVFS). Ca(2+) contacts are provided by Glu-254 and Glu-256. Residue Thr-271 participates in D-xylotriose binding. Residue Arg-276 coordinates Ca(2+). Repeat 1 spans residues 279-340 (GYIENGNTVT…SSTGSWNTYQ (62 aa)). The interval 279 to 477 (GYIENGNTVT…GSTGSFDTYR (199 aa)) is 2 X 61 AA approximate repeats. Positions 280, 337, and 364 each coordinate D-xylotriose. Tyr-280, Asn-337, and Asn-364 together coordinate D-xylobiose. Ca(2+) is bound by residues Asp-366, Gln-391, Glu-393, and Ser-413. Repeat 2 spans residues 416–477 (GYIENGYSTT…GSTGSFDTYR (62 aa)). Positions 417, 474, and 501 each coordinate D-xylotriose. Asp-503 lines the Ca(2+) pocket.

It belongs to the glycosyl hydrolase 11 (cellulase G) family.

The catalysed reaction is Endohydrolysis of (1-&gt;4)-beta-D-xylosidic linkages in xylans.. It functions in the pathway glycan degradation; xylan degradation. This is Endo-1,4-beta-xylanase A (xynA) from Thermoclostridium stercorarium (Clostridium stercorarium).